Here is a 385-residue protein sequence, read N- to C-terminus: Putative type I restriction enzyme specificity subunit S.HindORF215P (385 aa).

It belongs to the type-I restriction system S methylase family.

In terms of biological role, a putative specificity subunit for a type I restriction enzyme; the corresponding endonuclease and methylase subunits have multiple frameshifts and are probably not expressed. This is Putative type I restriction enzyme specificity subunit S.HindORF215P from Haemophilus influenzae (strain ATCC 51907 / DSM 11121 / KW20 / Rd).